A 545-amino-acid chain; its full sequence is MSRVTNTPEWQKLKEYSNKLPHMRELFATDSARFDKMSLKACGLFLDYSKNRVTEVVLGALFDLAKQAQLEARINAMFAGDIINTTEKRAVLHTALRAPNDAVVEVDGVNVVPEVHATLDKIESFVASITSGEWRGYTGKAITDIVSIGIGGSFLGPKIVTQALRPYWTGKLNCHFVANVDATSLVEKLKLVDPETTLFLMSSKSFGTQETLTNTLSARDWFLQSGASQADVAKHFAAVTSNVAKATDFGIDEANVFPMWDWVGGRYSLWSAIGLPIALMVGMDNYRALLAGARSMDEHFTSAPLAENMPVIMGLLSVWYGNFFNAQSHVVLTYDHYLRGLPAYFQQLDMESNGKSAMMDGETVDFSTGPVIWGGEGTNGQHAYHQLLHQGTALIPADFIMPLQSHNPLGEHHVQLASNCFGQTQALMQGRTYEEALAELAASNLSDDEKSLIARHKVMEGNKPSNTLLMDKLTPSTLGALIALYEHRTFVQGVIWDINSFDQWGVELGKTLGNDVLARLTADEDASALDSSSNALINLFRKGQI.

Catalysis depends on glutamate 351, which acts as the Proton donor. Active-site residues include histidine 382 and lysine 510.

It belongs to the GPI family.

It localises to the cytoplasm. The catalysed reaction is alpha-D-glucose 6-phosphate = beta-D-fructose 6-phosphate. Its pathway is carbohydrate biosynthesis; gluconeogenesis. The protein operates within carbohydrate degradation; glycolysis; D-glyceraldehyde 3-phosphate and glycerone phosphate from D-glucose: step 2/4. Functionally, catalyzes the reversible isomerization of glucose-6-phosphate to fructose-6-phosphate. The protein is Glucose-6-phosphate isomerase of Shewanella amazonensis (strain ATCC BAA-1098 / SB2B).